The primary structure comprises 216 residues: Ras-related protein Rab-11A (216 aa).

Position 2 is an N-acetylglycine (Gly2). GTP is bound by residues Ser20, Gly21, Val22, Gly23, Lys24, Ser25, Asn26, Asn37, Leu38, Ser40, Ser42, and Thr43. Ser25 contacts Mg(2+). The Switch 1 signature appears at 36-47 (FNLESKSTIGVE). 2 residues coordinate Mg(2+): Thr43 and Asp66. The short motif at 67–86 (TAGQERYRAITSAYYRGAVG) is the Switch 2 element. Residues Gly69, Asn124, Lys125, Asp127, Ala155, and Leu156 each coordinate GTP. Positions 183–207 (DRRENDMSPSNNVVPIHVPPTTENK) are disordered. S-geranylgeranyl cysteine attachment occurs at residues Cys212 and Cys213. Residue Cys213 is modified to Cysteine methyl ester. Residues 214-216 (QNI) constitute a propeptide, removed in mature form.

The protein belongs to the small GTPase superfamily. Rab family. As to quaternary structure, interacts (GTP-bound form) with RAB11FIPs (via their C-termini) including RAB11FIP1, RAB11FIP2, RAB11FIP3, RAB11FIP4 and RAB11FIP5 effectors. Forms a complex with RAB11FIP3 and dynein intermediate chain DYNC1LI1; the interaction between RAB11A1 and RAB11FIP3 is direct; the complex regulates endocytic trafficking. Interacts with EVI5; EVI5 and RAB11FIP3 may be mutually exclusive and compete for binding RAB11A. Interacts with SGSM1, SGSM2, SGSM3 and VIPAS39. Interacts with EXOC6 in a GTP-dependent manner. Interacts with RAB11FIP5. Interacts with STXBP6. Interacts (GDP-bound form) with ZFYVE27. Interacts with BIRC6/bruce. May interact with TBC1D14. Interacts with UNC119; in a cell cycle-dependent manner. GDP-bound and nucleotide-free forms interact with SH3BP5. Interacts (GDP-bound form) with KIF5A in a ZFYVE27-dependent manner. Interacts (GDP-bound form) with RELCH. Found in a complex composed of RELCH, OSBP1 and RAB11A. Interacts with TBC1D12. Interacts with DEF6. Interacts with ATP9A. Forms a heterotetramer with RAB11FIP3; the GTP-bound form is preferred for binding. Forms a complex with Rabin8/RAB3IP and RAB11FIP3, probably a heterohexamer with two of each protein subunit, where Rabin8/RAB3IP and RAB11FIP3 simultaneously bind to RAB11A; the complex promotes preciliary trafficking and cilia growth. Forms a complex containing RAB11A, ASAP1, Rabin8/RAB3IP, RAP11FIP3 and ARF4; the complex promotes preciliary trafficking; the complex binds to RHO in photoreceptor cells and promotes RHO ciliary transport. Interacts (GTP-bound form) with WDR44; the interaction prevents RAB11A-RAB3IP-RAB11FIP3 complex formation. It depends on Mg(2+) as a cofactor.

The protein localises to the cell membrane. It localises to the endosome membrane. It is found in the recycling endosome membrane. The protein resides in the cleavage furrow. Its subcellular location is the cytoplasmic vesicle. The protein localises to the phagosome. It localises to the cytoplasmic vesicle membrane. It is found in the golgi apparatus. The protein resides in the trans-Golgi network. The catalysed reaction is GTP + H2O = GDP + phosphate + H(+). Its activity is regulated as follows. Regulated by guanine nucleotide exchange factors (GEFs) which promote the exchange of bound GDP for free GTP. Regulated by GTPase activating proteins (GAPs) which increase the GTP hydrolysis activity. Inhibited by GDP dissociation inhibitors (GDIs) which prevent Rab-GDP dissociation. In terms of biological role, the small GTPases Rab are key regulators of intracellular membrane trafficking, from the formation of transport vesicles to their fusion with membranes. Rabs cycle between an inactive GDP-bound form and an active GTP-bound form that is able to recruit to membranes different set of downstream effectors directly responsible for vesicle formation, movement, tethering and fusion. The small Rab GTPase RAB11A regulates endocytic recycling. Forms a functional Rab11/RAB11FIP3/dynein complex that regulates the movement of peripheral sorting endosomes (SE) along microtubule tracks toward the microtubule organizing center/centrosome, generating the endosomal recycling compartment (ERC). Acts as a major regulator of membrane delivery during cytokinesis. Together with MYO5B and RAB8A participates in epithelial cell polarization. Together with Rabin8/RAB3IP, RAB8A, the exocyst complex, PARD3, PRKCI, ANXA2, CDC42 and DNMBP promotes transcytosis of PODXL to the apical membrane initiation sites (AMIS), apical surface formation and lumenogenesis. Together with MYO5B participates in CFTR trafficking to the plasma membrane and TF (Transferrin) recycling in nonpolarized cells. Required in a complex with MYO5B and RAB11FIP2 for the transport of NPC1L1 to the plasma membrane. Participates in the sorting and basolateral transport of CDH1 from the Golgi apparatus to the plasma membrane. Regulates the recycling of FCGRT (receptor of Fc region of monomeric IgG) to basolateral membranes. May also play a role in melanosome transport and release from melanocytes. Promotes Rabin8/RAB3IP preciliary vesicular trafficking to mother centriole by forming a ciliary targeting complex containing Rab11, ASAP1, Rabin8/RAB3IP, RAB11FIP3 and ARF4, thereby regulating ciliogenesis initiation. On the contrary, upon LPAR1 receptor signaling pathway activation, interaction with phosphorylated WDR44 prevents Rab11-RAB3IP-RAB11FIP3 complex formation and cilia growth. Participates in the export of a subset of neosynthesized proteins through a Rab8-Rab10-Rab11-endososomal dependent export route via interaction with WDR44. In Bos taurus (Bovine), this protein is Ras-related protein Rab-11A.